We begin with the raw amino-acid sequence, 289 residues long: Extracellular ribonuclease (289 aa).

A signal peptide spans 1-24 (MTKKLWFLPIVCLFFILGWTAPSA). Residues 25-51 (SAGAPADTNLYSRLAVSTAGGTTLFPQ) constitute a propeptide that is removed on maturation. The tract at residues 177 to 197 (FDNGGSEYPKAPGNYYDGDSW) is disordered.

The protein resides in the secreted. In terms of biological role, mg(2+)-activated ribonuclease which hydrolyzes RNA apparently nonspecifically into oligonucleotides with 5'-terminal phosphate. The chain is Extracellular ribonuclease (bsn) from Bacillus amyloliquefaciens (Bacillus velezensis).